The sequence spans 89 residues: Small ribosomal subunit protein bS20 (89 aa).

Residues 1–28 (MTLANIKSAKKRAVQSEKRRQHNASQRS) form a disordered region.

The protein belongs to the bacterial ribosomal protein bS20 family.

Functionally, binds directly to 16S ribosomal RNA. The polypeptide is Small ribosomal subunit protein bS20 (Haemophilus ducreyi (strain 35000HP / ATCC 700724)).